Here is a 660-residue protein sequence, read N- to C-terminus: Bifunctional polymyxin resistance protein ArnA (660 aa).

Residues 1–304 (MKTVVFAYHD…TLGLVQGSRL (304 aa)) form a formyltransferase ArnAFT region. 86–88 (HLI) lines the (6R)-10-formyltetrahydrofolate pocket. H104 functions as the Proton donor; for formyltransferase activity in the catalytic mechanism. (6R)-10-formyltetrahydrofolate is bound by residues R114 and 136–140 (VKRAD). The interval 314-660 (RRTRVLILGV…RTVDLTDKPS (347 aa)) is dehydrogenase ArnADH. NAD(+) is bound by residues D347 and 368-369 (DI). Residues A393, Y398, and 432-433 (TS) contribute to the UDP-alpha-D-glucuronate site. The Proton acceptor; for decarboxylase activity role is filled by E434. UDP-alpha-D-glucuronate-binding positions include R460, N492, 526-535 (KLIDGGKQKR), and Y613. Residue R619 is the Proton donor; for decarboxylase activity of the active site.

In the N-terminal section; belongs to the Fmt family. UDP-L-Ara4N formyltransferase subfamily. The protein in the C-terminal section; belongs to the NAD(P)-dependent epimerase/dehydratase family. UDP-glucuronic acid decarboxylase subfamily. In terms of assembly, homohexamer, formed by a dimer of trimers.

It catalyses the reaction UDP-alpha-D-glucuronate + NAD(+) = UDP-beta-L-threo-pentopyranos-4-ulose + CO2 + NADH. The catalysed reaction is UDP-4-amino-4-deoxy-beta-L-arabinose + (6R)-10-formyltetrahydrofolate = UDP-4-deoxy-4-formamido-beta-L-arabinose + (6S)-5,6,7,8-tetrahydrofolate + H(+). It participates in nucleotide-sugar biosynthesis; UDP-4-deoxy-4-formamido-beta-L-arabinose biosynthesis; UDP-4-deoxy-4-formamido-beta-L-arabinose from UDP-alpha-D-glucuronate: step 1/3. The protein operates within nucleotide-sugar biosynthesis; UDP-4-deoxy-4-formamido-beta-L-arabinose biosynthesis; UDP-4-deoxy-4-formamido-beta-L-arabinose from UDP-alpha-D-glucuronate: step 3/3. It functions in the pathway bacterial outer membrane biogenesis; lipopolysaccharide biosynthesis. Its function is as follows. Bifunctional enzyme that catalyzes the oxidative decarboxylation of UDP-glucuronic acid (UDP-GlcUA) to UDP-4-keto-arabinose (UDP-Ara4O) and the addition of a formyl group to UDP-4-amino-4-deoxy-L-arabinose (UDP-L-Ara4N) to form UDP-L-4-formamido-arabinose (UDP-L-Ara4FN). The modified arabinose is attached to lipid A and is required for resistance to polymyxin and cationic antimicrobial peptides. This is Bifunctional polymyxin resistance protein ArnA from Escherichia coli (strain SMS-3-5 / SECEC).